A 303-amino-acid chain; its full sequence is MESALLSILTLVIIAEFVIGNLSNGFXVLINCIDWVSKRQLSSVDKILTFLAISRIGLIWELLVSWFLGLHYLAIFVSGTGLRIMIFSWVVSNHFSLWLATILSIFYLLKIASFSSPAFLYLKWRVNQVILMILLGTLVFLFLNLIQINIHIKDWLDRCERNTIWNFSMSGLPTFSVPVKFTMTMFSLAPFTVALISFLLLIFSLRKHLQKMQLNYKGHREPRTKAHINALKIVISFLLLYASFFLCILISWISELYQNTLIHMFCQTIGVFYPSSHSFLLILGNPKLRQASLLVAAKVWAKR.

Residues 1–7 (MESALLS) are Extracellular-facing. Residues 8 to 28 (ILTLVIIAEFVIGNLSNGFXV) form a helical membrane-spanning segment. At 29-55 (LINCIDWVSKRQLSSVDKILTFLAISR) the chain is on the cytoplasmic side. A helical membrane pass occupies residues 56–76 (IGLIWELLVSWFLGLHYLAIF). The Extracellular portion of the chain corresponds to 77–85 (VSGTGLRIM). The chain crosses the membrane as a helical span at residues 86 to 106 (IFSWVVSNHFSLWLATILSIF). Over 107–128 (YLLKIASFSSPAFLYLKWRVNQ) the chain is Cytoplasmic. Residues 129-149 (VILMILLGTLVFLFLNLIQIN) form a helical membrane-spanning segment. The Extracellular portion of the chain corresponds to 150 to 184 (IHIKDWLDRCERNTIWNFSMSGLPTFSVPVKFTMT). Asn166 is a glycosylation site (N-linked (GlcNAc...) asparagine). Residues 185–205 (MFSLAPFTVALISFLLLIFSL) form a helical membrane-spanning segment. Residues 206-232 (RKHLQKMQLNYKGHREPRTKAHINALK) are Cytoplasmic-facing. Residues 233-253 (IVISFLLLYASFFLCILISWI) form a helical membrane-spanning segment. The Extracellular portion of the chain corresponds to 254-261 (SELYQNTL). A helical transmembrane segment spans residues 262–282 (IHMFCQTIGVFYPSSHSFLLI). At 283–303 (LGNPKLRQASLLVAAKVWAKR) the chain is on the cytoplasmic side.

The protein belongs to the G-protein coupled receptor T2R family.

Its subcellular location is the membrane. Its function is as follows. Receptor that may play a role in the perception of bitterness and is gustducin-linked. May play a role in sensing the chemical composition of the gastrointestinal content. The activity of this receptor may stimulate alpha gustducin, mediate PLC-beta-2 activation and lead to the gating of TRPM5. This Papio hamadryas (Hamadryas baboon) protein is Taste receptor type 2 member 13 (TAS2R13).